A 59-amino-acid chain; its full sequence is UPF0434 protein VC_1876 (59 aa).

It belongs to the UPF0434 family.

The polypeptide is UPF0434 protein VC_1876 (Vibrio cholerae serotype O1 (strain ATCC 39315 / El Tor Inaba N16961)).